The chain runs to 400 residues: 1-deoxy-D-xylulose 5-phosphate reductoisomerase (400 aa).

Thr17, Gly18, Ser19, Ile20, and Asn131 together coordinate NADPH. Lys132 contributes to the 1-deoxy-D-xylulose 5-phosphate binding site. Glu133 lines the NADPH pocket. Asp157 contributes to the Mn(2+) binding site. Residues Ser158, Glu159, Ser188, and His211 each contribute to the 1-deoxy-D-xylulose 5-phosphate site. Glu159 lines the Mn(2+) pocket. An NADPH-binding site is contributed by Gly217. 4 residues coordinate 1-deoxy-D-xylulose 5-phosphate: Ser224, Asn229, Lys230, and Glu233. Glu233 provides a ligand contact to Mn(2+).

Belongs to the DXR family. Mg(2+) is required as a cofactor. The cofactor is Mn(2+).

It catalyses the reaction 2-C-methyl-D-erythritol 4-phosphate + NADP(+) = 1-deoxy-D-xylulose 5-phosphate + NADPH + H(+). Its pathway is isoprenoid biosynthesis; isopentenyl diphosphate biosynthesis via DXP pathway; isopentenyl diphosphate from 1-deoxy-D-xylulose 5-phosphate: step 1/6. Catalyzes the NADPH-dependent rearrangement and reduction of 1-deoxy-D-xylulose-5-phosphate (DXP) to 2-C-methyl-D-erythritol 4-phosphate (MEP). In Pseudomonas putida (strain ATCC 47054 / DSM 6125 / CFBP 8728 / NCIMB 11950 / KT2440), this protein is 1-deoxy-D-xylulose 5-phosphate reductoisomerase.